The sequence spans 621 residues: 1-deoxy-D-xylulose-5-phosphate synthase (621 aa).

Residues His76 and 117–119 contribute to the thiamine diphosphate site; that span reads AHS. Asp148 serves as a coordination point for Mg(2+). Residues 149–150, Asn178, Tyr285, and Glu367 contribute to the thiamine diphosphate site; that span reads GA. Position 178 (Asn178) interacts with Mg(2+).

It belongs to the transketolase family. DXPS subfamily. Homodimer. It depends on Mg(2+) as a cofactor. Requires thiamine diphosphate as cofactor.

The catalysed reaction is D-glyceraldehyde 3-phosphate + pyruvate + H(+) = 1-deoxy-D-xylulose 5-phosphate + CO2. It functions in the pathway metabolic intermediate biosynthesis; 1-deoxy-D-xylulose 5-phosphate biosynthesis; 1-deoxy-D-xylulose 5-phosphate from D-glyceraldehyde 3-phosphate and pyruvate: step 1/1. Catalyzes the acyloin condensation reaction between C atoms 2 and 3 of pyruvate and glyceraldehyde 3-phosphate to yield 1-deoxy-D-xylulose-5-phosphate (DXP). This Aromatoleum aromaticum (strain DSM 19018 / LMG 30748 / EbN1) (Azoarcus sp. (strain EbN1)) protein is 1-deoxy-D-xylulose-5-phosphate synthase.